A 130-amino-acid chain; its full sequence is Small ribosomal subunit protein uS8 (130 aa).

The protein belongs to the universal ribosomal protein uS8 family. In terms of assembly, part of the 30S ribosomal subunit.

In terms of biological role, one of the primary rRNA binding proteins, it binds directly to 16S rRNA central domain where it helps coordinate assembly of the platform of the 30S subunit. The protein is Small ribosomal subunit protein uS8 of Methanoregula boonei (strain DSM 21154 / JCM 14090 / 6A8).